A 36-amino-acid chain; its full sequence is Potassium channel toxin alpha-KTx 16.9 (36 aa).

Disulfide bonds link Cys7–Cys28, Cys13–Cys33, and Cys17–Cys35.

Belongs to the short scorpion toxin superfamily. Potassium channel inhibitor family. Alpha-KTx 16 subfamily. Expressed by the venom gland.

The protein resides in the secreted. Functionally, poorly competes with (125)I-kaliotoxin binding on rat brain synaptosome (IC(50)&gt;100 nM). Is a poor Kv1.3/KCNA3 ligand. May have as real target KCa1.1/KCNMA1 channel. Shows weak toxicity on mice. This is Potassium channel toxin alpha-KTx 16.9 from Buthus paris (Scorpion).